We begin with the raw amino-acid sequence, 404 residues long: 8-amino-7-oxononanoate synthase (404 aa).

Arg-20 contacts substrate. 116–117 (GY) serves as a coordination point for pyridoxal 5'-phosphate. A substrate-binding site is contributed by His-141. The pyridoxal 5'-phosphate site is built by Ser-187, His-215, and Thr-243. Lys-246 carries the post-translational modification N6-(pyridoxal phosphate)lysine. Thr-366 is a binding site for substrate.

The protein belongs to the class-II pyridoxal-phosphate-dependent aminotransferase family. BioF subfamily. Homodimer. Pyridoxal 5'-phosphate serves as cofactor.

The catalysed reaction is 6-carboxyhexanoyl-[ACP] + L-alanine + H(+) = (8S)-8-amino-7-oxononanoate + holo-[ACP] + CO2. The protein operates within cofactor biosynthesis; biotin biosynthesis. In terms of biological role, catalyzes the decarboxylative condensation of pimeloyl-[acyl-carrier protein] and L-alanine to produce 8-amino-7-oxononanoate (AON), [acyl-carrier protein], and carbon dioxide. This chain is 8-amino-7-oxononanoate synthase, found in Cupriavidus taiwanensis (strain DSM 17343 / BCRC 17206 / CCUG 44338 / CIP 107171 / LMG 19424 / R1) (Ralstonia taiwanensis (strain LMG 19424)).